The sequence spans 100 residues: Apolipoprotein C-II (100 aa).

The N-terminal stretch at 1–22 is a signal peptide; the sequence is MDSRFLLALFLVLLVLGCEVQA. Residues 66 to 74 are lipid binding; the sequence is SVDEKLRDM. Residues 78 to 100 form a lipoprotein lipase cofactor region; the sequence is SSAAMTTYAIIFTDQILTLLKGE.

It belongs to the apolipoprotein C2 family. Proapolipoprotein C-II is synthesized as a sialic acid containing glycoprotein which is subsequently desialylated prior to its proteolytic processing. Post-translationally, proapolipoprotein C-II, the major form found in plasma undergoes proteolytic cleavage of its N-terminal hexapeptide to generate the mature form apolipoprotein C-II, which occurs as the minor form in plasma.

It localises to the secreted. Its function is as follows. Component of chylomicrons, very low-density lipoproteins (VLDL), low-density lipoproteins (LDL), and high-density lipoproteins (HDL) in plasma. Plays an important role in lipoprotein metabolism as an activator of lipoprotein lipase. In Myodes glareolus (Bank vole), this protein is Apolipoprotein C-II (APOC2).